Here is a 387-residue protein sequence, read N- to C-terminus: Protein phosphatase 2C 50 (387 aa).

Residues 60–377 enclose the PPM-type phosphatase domain; it reads VWGCASTRGR…DNITVIVVDL (318 aa). The Mn(2+) site is built by aspartate 118 and glycine 119. A Modulates binding affinity to PYR/PYL/RCAR abscisic acid intracellular receptors motif is present at residues 264-268; the sequence is VSGIL. Mn(2+)-binding residues include aspartate 306 and aspartate 368.

It belongs to the PP2C family. Interacts with PYL3, PYL5, PYL9 and PYL10. Binding to PYL3, PYL5, PYL9 and PYL10 is dependent on the presence of abscisic acid (ABA). Interacts with SAPK10. The cofactor is Mg(2+). Mn(2+) serves as cofactor.

It catalyses the reaction O-phospho-L-seryl-[protein] + H2O = L-seryl-[protein] + phosphate. It carries out the reaction O-phospho-L-threonyl-[protein] + H2O = L-threonyl-[protein] + phosphate. Protein phosphatase involved in abscisic acid (ABA) signaling. Together with PYL3 and SAPK10, may form an ABA signaling module involved in stress response. In Oryza sativa subsp. japonica (Rice), this protein is Protein phosphatase 2C 50.